A 210-amino-acid polypeptide reads, in one-letter code: Na(+)-translocating NADH-quinone reductase subunit D (210 aa).

The next 6 helical transmembrane spans lie at 11-31, 42-62, 72-92, 103-123, 131-151, and 178-198; these read ILAP…VCSA, FVMT…VSLI, IIVQ…VLKA, VFVG…AFAM, FIDG…VGFF, and NGLM…IWAI.

This sequence belongs to the NqrDE/RnfAE family. In terms of assembly, composed of six subunits; NqrA, NqrB, NqrC, NqrD, NqrE and NqrF.

It is found in the cell inner membrane. It catalyses the reaction a ubiquinone + n Na(+)(in) + NADH + H(+) = a ubiquinol + n Na(+)(out) + NAD(+). Functionally, NQR complex catalyzes the reduction of ubiquinone-1 to ubiquinol by two successive reactions, coupled with the transport of Na(+) ions from the cytoplasm to the periplasm. NqrA to NqrE are probably involved in the second step, the conversion of ubisemiquinone to ubiquinol. The chain is Na(+)-translocating NADH-quinone reductase subunit D from Vibrio atlanticus (strain LGP32) (Vibrio splendidus (strain Mel32)).